Here is a 350-residue protein sequence, read N- to C-terminus: Nuclear pore complex-interacting protein family member A3 (350 aa).

The disordered stretch occupies residues 306-325 (KTPPECLLTPLPPSAPPSVD).

This sequence belongs to the NPIP family.

The chain is Nuclear pore complex-interacting protein family member A3 (NPIPA3) from Homo sapiens (Human).